Here is a 143-residue protein sequence, read N- to C-terminus: Transcription antitermination protein NusB (143 aa).

The protein belongs to the NusB family.

Involved in transcription antitermination. Required for transcription of ribosomal RNA (rRNA) genes. Binds specifically to the boxA antiterminator sequence of the ribosomal RNA (rrn) operons. This Desulforamulus reducens (strain ATCC BAA-1160 / DSM 100696 / MI-1) (Desulfotomaculum reducens) protein is Transcription antitermination protein NusB.